A 300-amino-acid chain; its full sequence is Ribosomal protein L11 methyltransferase (300 aa).

4 residues coordinate S-adenosyl-L-methionine: threonine 147, glycine 168, aspartate 190, and asparagine 236.

The protein belongs to the methyltransferase superfamily. PrmA family.

The protein resides in the cytoplasm. It carries out the reaction L-lysyl-[protein] + 3 S-adenosyl-L-methionine = N(6),N(6),N(6)-trimethyl-L-lysyl-[protein] + 3 S-adenosyl-L-homocysteine + 3 H(+). Methylates ribosomal protein L11. The sequence is that of Ribosomal protein L11 methyltransferase from Leptospira interrogans serogroup Icterohaemorrhagiae serovar Lai (strain 56601).